An 800-amino-acid chain; its full sequence is Aldehyde dehydrogenase family 16 member A1 (800 aa).

The protein belongs to the aldehyde dehydrogenase family. Interacts with SPG21.

The polypeptide is Aldehyde dehydrogenase family 16 member A1 (ALDH16A1) (Bos taurus (Bovine)).